The following is a 118-amino-acid chain: Transcription factor PAR1 (118 aa).

The disordered stretch occupies residues 1–58 (MEETLATPDATRRSLSPSCSATVKSRAAGFERRTKRRLSETNASVREDREEAEEEEDE). The segment covering 13-23 (RSLSPSCSATV) has biased composition (polar residues). The 50-residue stretch at 43–92 (ASVREDREEAEEEEDEVKEKIEALQRIIPGGAALGVDALFEETAGYILSL) folds into the bHLH domain.

It belongs to the bHLH protein family. In terms of assembly, homodimer.

It localises to the nucleus. Atypical bHLH transcription factor that acts as a negative regulator of a variety of shade avoidance syndrome (SAS) responses, including seedling elongation and photosynthetic pigment accumulation. Acts as a direct transcriptional repressor of two auxin-responsive genes, SAUR15 and SAUR68. May function in integrating shade and hormone transcriptional networks in response to light and auxin changes. The polypeptide is Transcription factor PAR1 (PAR1) (Arabidopsis thaliana (Mouse-ear cress)).